The following is a 302-amino-acid chain: N-acetyl-D-glucosamine kinase (302 aa).

Residues 4 to 11 (GFDVGGTK) and 133 to 140 (GFGGGFIY) each bind ATP. Histidine 157, cysteine 177, cysteine 179, and cysteine 184 together coordinate Zn(2+).

The protein belongs to the ROK (NagC/XylR) family. NagK subfamily.

It carries out the reaction N-acetyl-D-glucosamine + ATP = N-acetyl-D-glucosamine 6-phosphate + ADP + H(+). Its pathway is cell wall biogenesis; peptidoglycan recycling. Its function is as follows. Catalyzes the phosphorylation of N-acetyl-D-glucosamine (GlcNAc) derived from cell-wall degradation, yielding GlcNAc-6-P. In Vibrio parahaemolyticus serotype O3:K6 (strain RIMD 2210633), this protein is N-acetyl-D-glucosamine kinase.